Consider the following 305-residue polypeptide: CRISPR-associated endonuclease Cas1 (305 aa).

The tract at residues 96–278 (SDKLLYQAKL…EDVLAAGEIQ (183 aa)) is sufficient for cleavage of ssRNA, ssDNA and Holliday junction DNA. Mg(2+) contacts are provided by Glu141, His208, and Asp221. Residues 278–305 (QPPAPPEDAQPVAIPLPVSLGDAGHRSS) form a disordered region.

It belongs to the CRISPR-associated endonuclease Cas1 family. As to quaternary structure, homodimer. Part of the Cas1-Cas2 complex. Interacts with RecB, RecC, RuvB, CasC and CasE. Forms a hexamer with 2 Cas1 dimers sandwiching a Cas2 dimer. The DNA lies across a flat surface extending from 1 Cas1 dimer, across the Cas2 dimer and contacting the other Cas1 dimer. Only 1 Cas1 protein from each dimer is catalytic, the other interacts with the Cas2 dimer and possibly target DNA. The cofactor is Mg(2+).

The protein resides in the cytoplasm. Nuclease activity partially inhibited by CasE. Its function is as follows. CRISPR (clustered regularly interspaced short palindromic repeat), is an adaptive immune system that provides protection against mobile genetic elements (viruses, transposable elements and conjugative plasmids). CRISPR clusters contain sequences complementary to antecedent mobile elements and target invading nucleic acids. CRISPR clusters are transcribed and processed into CRISPR RNA (crRNA). The Cas1-Cas2 complex is involved in CRISPR adaptation, the first stage of CRISPR immunity, being required for the addition/removal of CRISPR spacers at the leader end of the CRISPR locus. The Cas1-Cas2 complex introduces staggered nicks into both strands of the CRISPR array near the leader repeat and joins the 5'-ends of the repeat strands with the 3'-ends of the new spacer sequence. Spacer DNA integration requires supercoiled target DNA and 3'-OH ends on the inserted (spacer) DNA and probably initiates with a nucleophilic attack of the C 3'-OH end of the protospacer on the minus strand of the first repeat sequence. Expression of Cas1-Cas2 in a strain lacking both genes permits spacer acquisition. Non-specifically binds DNA; the Cas1-Cas2 complex preferentially binds CRISPR-locus DNA. Highest binding is seen to a dual forked DNA complex with 3'-overhangs and a protospacer-adjacent motif-complement specifically positioned. The protospacer DNA lies across a flat surface extending from 1 Cas1 dimer, across the Cas2 dimer and contacting the other Cas1 dimer; the 23 bp-long ds section of the DNA is bracketed by 1 Tyr-22 from each of the Cas1 dimers. Cas1 cuts within the 3'-overhang, to generate a 33-nucleotide DNA that is probably incorporated into the CRISPR leader by a cut-and-paste mechanism. Cas1 alone endonucleolytically cleaves linear ssRNA, ssDNA and short (34 base) dsDNA as well as branched DNA substrates such as Holliday junctions, replication forks and 5'-flap DNA substrates. In vitro catalyzes a concerted transesterification reaction on branched DNA, as would be expected during integration of protospacers into the CRISPR leader sequence; Cas2 is not required in vitro. This reaction requires a 3'-OH group at the branch point. Genetic interactions suggest Cas1 interacts with components of the RecBC and RuvB DNA repair systems. This chain is CRISPR-associated endonuclease Cas1 (ygbT), found in Escherichia coli (strain K12).